The primary structure comprises 114 residues: Large ribosomal subunit protein uL22 (114 aa).

Belongs to the universal ribosomal protein uL22 family. Part of the 50S ribosomal subunit.

Its function is as follows. This protein binds specifically to 23S rRNA; its binding is stimulated by other ribosomal proteins, e.g. L4, L17, and L20. It is important during the early stages of 50S assembly. It makes multiple contacts with different domains of the 23S rRNA in the assembled 50S subunit and ribosome. In terms of biological role, the globular domain of the protein is located near the polypeptide exit tunnel on the outside of the subunit, while an extended beta-hairpin is found that lines the wall of the exit tunnel in the center of the 70S ribosome. In Myxococcus xanthus (strain DK1622), this protein is Large ribosomal subunit protein uL22.